A 149-amino-acid polypeptide reads, in one-letter code: Large ribosomal subunit protein bL9 (149 aa).

Belongs to the bacterial ribosomal protein bL9 family.

Its function is as follows. Binds to the 23S rRNA. The chain is Large ribosomal subunit protein bL9 from Salmonella agona (strain SL483).